Here is a 254-residue protein sequence, read N- to C-terminus: Aspartate/glutamate leucyltransferase (254 aa).

It belongs to the R-transferase family. Bpt subfamily.

It localises to the cytoplasm. It catalyses the reaction N-terminal L-glutamyl-[protein] + L-leucyl-tRNA(Leu) = N-terminal L-leucyl-L-glutamyl-[protein] + tRNA(Leu) + H(+). The enzyme catalyses N-terminal L-aspartyl-[protein] + L-leucyl-tRNA(Leu) = N-terminal L-leucyl-L-aspartyl-[protein] + tRNA(Leu) + H(+). Functions in the N-end rule pathway of protein degradation where it conjugates Leu from its aminoacyl-tRNA to the N-termini of proteins containing an N-terminal aspartate or glutamate. This chain is Aspartate/glutamate leucyltransferase, found in Maricaulis maris (strain MCS10) (Caulobacter maris).